The chain runs to 1215 residues: Inner capsid protein VP3 (1215 aa).

Residues 1–81 (MPRRPRRNAK…RVDNDGDVIT (81 aa)) are disordered. Low complexity predominate over residues 21–44 (LVAPAANASVSSTVNTTTSPTLAA). The C2H2-type zinc-finger motif lies at 118-141 (YRCNVCNAEFPSMSAMTEHLRTSH).

This sequence belongs to the turreted BTV-fold inner capsid family. Homodecamer; each decamer is made up of two conformers of VP2, called VP2A and VP2B. 12 homodecamers assemble to form an icosahedral capsid. Interacts with VP6.

The protein resides in the virion. Its function is as follows. Inner capsid protein that self-assembles to form an icosahedral capsid with a T=2 symmetry, which consists of 120 copies of VP2, with channels at each of its five-fold vertices. This capsid constitutes the innermost concentric layer of the viral mature particle. The protein is Inner capsid protein VP3 (S3) of Ctenopharyngodon idella (Grass carp).